Reading from the N-terminus, the 388-residue chain is Putative nickel insertion protein (388 aa).

Belongs to the LarC family.

The protein is Putative nickel insertion protein of Syntrophobacter fumaroxidans (strain DSM 10017 / MPOB).